Reading from the N-terminus, the 535-residue chain is Growth factor receptor-bound protein 7 (535 aa).

Positions 1 to 90 are disordered; it reads MELDLSPTHL…PILGGSSGAR (90 aa). Residues 21–37 are compositionally biased toward pro residues; it reads PATPPETPPPPDNPPPG. A Ras-associating domain is found at 99–185; it reads RLCVVKVYSE…SRFIFRKNFA (87 aa). A phosphotyrosine; by FAK1 mark is found at Tyr187 and Tyr341. Positions 228–341 constitute a PH domain; sequence FPEIQGFLQL…WLAAFRLFKY (114 aa). The residue at position 364 (Ser364) is a Phosphoserine. An SH2 domain is found at 434–530; the sequence is WFHGRISREE…ILPCLLRHCC (97 aa).

It belongs to the GRB7/10/14 family. Homodimer. Interacts (via SH2 domain) with EGFR, ERBB2, ERBB3 (when phosphorylated), ERBB4 (when phosphorylated), EPHB1, INSR, FGFR1, PDGFRA (tyrosine phosphorylated) and PDGFRB (tyrosine phosphorylated). Interacts with SHC1. Interacts with RND1. Interacts (when tyrosine phosphorylated) with FHL2 and HAX1. Interacts (via SH2 domain) with RET and PTK2/FAK1. Interacts (when not phosphorylated) with ELAVL1. In stressed cells, but not in normal cells, part of a complex that contains at least GRB7, PTK2/FAK1, STAU1, ELAVL1 and TIA1. Interacts (via SH2 domain) with KIT (phosphorylated). Interacts (via SH2 domain) with TEK/TIE2 (tyrosine phosphorylated). In terms of processing, phosphorylated on serine and threonine residues in response to activation of receptor kinases. Phosphorylated on tyrosine residues by TEK/TIE2. Phosphorylated on tyrosine residues by PTK2/FAK1, and possibly also other kinases. Phosphorylation is enhanced by activation of receptor kinases. Tyrosine phosphorylation is essential for activation of down-stream protein kinases. Phosphorylated on tyrosine residues in response to NTN1 signaling. Phosphorylation promotes stress granule disassembly during recovery after cellular stress.

The protein localises to the cytoplasm. It is found in the cell projection. Its subcellular location is the cell junction. It localises to the focal adhesion. The protein resides in the cell membrane. The protein localises to the cytoplasmic granule. Its function is as follows. Adapter protein that interacts with the cytoplasmic domain of numerous receptor kinases and modulates down-stream signaling. Promotes activation of down-stream protein kinases, including STAT3, AKT1, MAPK1 and/or MAPK3. Promotes activation of HRAS. Plays a role in signal transduction in response to EGF. Plays a role in the regulation of cell proliferation and cell migration. Plays a role in the assembly and stability of RNA stress granules. Binds to the 5'UTR of target mRNA molecules and represses translation of target mRNA species, when not phosphorylated. Phosphorylation impairs RNA binding and promotes stress granule disassembly during recovery after cellular stress. This is Growth factor receptor-bound protein 7 (Grb7) from Mus musculus (Mouse).